We begin with the raw amino-acid sequence, 525 residues long: MAAVVLAATRLLRGSGSWGCSRLRFGPPAYRRFSSGGAYPNIPLSSPLPGVPKPVFATVDGQEKFETKVTTLDNGLRVASQNKFGQFCTVGILINSGSRYEAKYLSGIAHFLEKLAFSSTARFDSKDEILLTLEKHGGICDCQTSRDTTMYAVSADSKGLDTVVALLADVVLQPRLTDEEVEMTRMAVQFELEDLNLRPDPEPLLTEMIHEAAYRENTVGLHRFCPTENVAKINREVLHSYLRNYYTPDRMVLAGVGVEHEHLVDCARKYLLGVQPAWGSAEAVDIDRSVAQYTGGIAKLERDMSNVSLGPTPIPELTHIMVGLESCSFLEEDFIPFAVLNMMMGGGGSFSAGGPGKGMFSRLYLNVLNRHHWMYNATSYHHSYEDTGLLCIHASADPRQVREMVEIITKEFILMGGTVDTVELERAKTQLTSMLMMNLESRPVIFEDVGRQVLATRSRKLPHELCTLIRNVKPEDVKRVASKMLRGKPAVAALGDLTDLPTYEHIQTALSSKDGRLPRTYRLFR.

Residues 1–33 (MAAVVLAATRLLRGSGSWGCSRLRFGPPAYRRF) constitute a mitochondrion transit peptide. K64 bears the N6-succinyllysine mark. K299 carries the post-translational modification N6-acetyllysine.

The protein belongs to the peptidase M16 family. As to quaternary structure, heterodimer of PMPCA (alpha) and PMPCB (beta) subunits, forming the mitochondrial processing protease (MPP) in which PMPCA is involved in substrate recognition and binding and PMPCB is the catalytic subunit. As to expression, ubiquitously expressed with highest expression in fetal tissues and adult brain, cerebellum and cerebellar vermis.

It localises to the mitochondrion matrix. It is found in the mitochondrion inner membrane. Functionally, substrate recognition and binding subunit of the essential mitochondrial processing protease (MPP), which cleaves the mitochondrial sequence off newly imported precursors proteins. The protein is Mitochondrial-processing peptidase subunit alpha (PMPCA) of Homo sapiens (Human).